Consider the following 243-residue polypeptide: Small ribosomal subunit protein eS4 (243 aa).

The S4 RNA-binding domain maps to 43 to 105 (IPLIYIVRDY…TGEHYRVLPN (63 aa)).

It belongs to the eukaryotic ribosomal protein eS4 family. In terms of assembly, part of the 30S ribosomal subunit.

This Thermococcus kodakarensis (strain ATCC BAA-918 / JCM 12380 / KOD1) (Pyrococcus kodakaraensis (strain KOD1)) protein is Small ribosomal subunit protein eS4.